The primary structure comprises 31 residues: Cyclotide cter-C (31 aa).

Residues 1-31 constitute a cross-link (cyclopeptide (Gly-Asp)); it reads GVPCAESCVWIPCTVTALLGCSCKDKVCYLD. Disulfide bonds link C4–C21, C8–C23, and C13–C28.

Post-translationally, contains 3 disulfide bonds. In terms of processing, this is a cyclic peptide.

Functionally, probably participates in a plant defense mechanism. The protein is Cyclotide cter-C of Clitoria ternatea (Butterfly pea).